Here is a 523-residue protein sequence, read N- to C-terminus: Metalloendopeptidase OMA1, mitochondrial (523 aa).

The transit peptide at 1 to 45 (MSFIYGLQSAARNCFFFRFNLLTNWRKCNTQAVTSRDFHQVKINH) directs the protein to the mitochondrion. A propeptide spanning residues 46–143 (IVNKSLGLGV…RSFHTSPRCQ (98 aa)) is cleaved from the precursor. The Mitochondrial matrix segment spans residues 144–195 (AAPAPLLLMILKPAQKLLAIIVGRGIRKWWQALPPNKKELFKESLRKNKWKL). The segment at 148-167 (PLLLMILKPAQKLLAIIVGR) is cardiolipin-binding. A stress-sensor region region spans residues 165-195 (VGRGIRKWWQALPPNKKELFKESLRKNKWKL). A helical transmembrane segment spans residues 196 to 216 (FLGLSSFGLLFVVFYFTHLEV). Position 327 (histidine 327) interacts with Zn(2+). The active site involves glutamate 328. Zn(2+)-binding residues include histidine 331 and glutamate 392. A disulfide bridge connects residues cysteine 407 and cysteine 465.

It belongs to the peptidase M48 family. As to quaternary structure, homooligomer. It depends on Zn(2+) as a cofactor. Autocatalytically cleaved in response to mitochondrial depolarization both at the N-terminus and C-terminus to generate the short active form (S-OMA1). Autocatalytic processing at the C-terminus takes place at residues 447-456. The S-OMA1 form is unstable. OMA1 pre-processing by AFG3L2 may participate in maturation before OMA1 autocatalytic cleavage. Degraded by YMEL1 in response to membrane depolarization. Protein turnover is regulated by prohibitin (PHB and PHB2), which promotes degradation of OMA1 in a cardiolipin-binding manner. Post-translationally, may form a redox-dependent disulfide bond. Exists in a semi-oxidized state and is activated by prolonged hypoxia.

The protein resides in the mitochondrion inner membrane. Protease activity is activated upon autocatalytic cleavage in response to mitochondrial depolarization. Its function is as follows. Metalloprotease that is part of the quality control system in the inner membrane of mitochondria. Activated in response to various mitochondrial stress, leading to the proteolytic cleavage of target proteins, such as OPA1, UQCC3 and DELE1. Involved in the fusion of the mitochondrial inner membranes by mediating cleavage of OPA1 at S1 position, generating the soluble OPA1 (S-OPA1), which cooperates with the membrane form (L-OPA1) to coordinate the fusion of mitochondrial inner membranes. Following stress conditions that induce loss of mitochondrial membrane potential, mediates cleavage of OPA1, leading to excess production of soluble OPA1 (S-OPA1) and negative regulation of mitochondrial fusion. Involved in mitochondrial safeguard in response to transient mitochondrial membrane depolarization (flickering) by catalyzing cleavage of OPA1, leading to excess production of S-OPA1, preventing mitochondrial hyperfusion. Also acts as a regulator of apoptosis: upon BAK and BAX aggregation, mediates cleavage of OPA1, leading to the remodeling of mitochondrial cristae and allowing the release of cytochrome c from mitochondrial cristae. In depolarized mitochondria, may also act as a backup protease for PINK1 by mediating PINK1 cleavage and promoting its subsequent degradation by the proteasome. May also cleave UQCC3 in response to mitochondrial depolarization. Also acts as an activator of the integrated stress response (ISR): in response to mitochondrial stress, mediates cleavage of DELE1 to generate the processed form of DELE1 (S-DELE1), which translocates to the cytosol and activates EIF2AK1/HRI to trigger the ISR. Its role in mitochondrial quality control is essential for regulating lipid metabolism as well as to maintain body temperature and energy expenditure under cold-stress conditions. Binds cardiolipin, possibly regulating its protein turnover. Required for the stability of the respiratory supercomplexes. This Bos taurus (Bovine) protein is Metalloendopeptidase OMA1, mitochondrial.